We begin with the raw amino-acid sequence, 558 residues long: Formate--tetrahydrofolate ligase 2 (558 aa).

67-74 is an ATP binding site; sequence TPAGEGKT.

The protein belongs to the formate--tetrahydrofolate ligase family.

The enzyme catalyses (6S)-5,6,7,8-tetrahydrofolate + formate + ATP = (6R)-10-formyltetrahydrofolate + ADP + phosphate. The protein operates within one-carbon metabolism; tetrahydrofolate interconversion. This Desulfitobacterium hafniense (strain Y51) protein is Formate--tetrahydrofolate ligase 2.